The following is a 611-amino-acid chain: Chloroplast sensor kinase, chloroplastic (611 aa).

The transit peptide at 1–79 (MLLSAIASQT…PGGGETMVAS (79 aa)) directs the protein to the chloroplast. The disordered stretch occupies residues 17–50 (NLHFSNSIPNPRPSNPSLKLLNASSSSSSSSSSS). Residues 40–50 (SSSSSSSSSSS) are compositionally biased toward low complexity. Residues 116–300 (DFQRLCLEQL…VMDQKTMLLQ (185 aa)) form a GAF region. A [3Fe-4S] cluster-binding site is contributed by cysteine 121. Serine 188 bears the Phosphoserine mark. Residues 312–602 (KLVEQIRGPL…RVELWLPAFP (291 aa)) form the Histidine kinase domain. Residues 345 to 380 (VEDLIVQGDQIKDTLEELQDAVHLTKANIVRHNEEA) adopt a coiled-coil conformation. Positions 385 to 402 (NKTHNETRRSKYEHKDPI) are enriched in basic and acidic residues. Residues 385 to 420 (NKTHNETRRSKYEHKDPIDGSQISSTRLSLGSGLDD) form a disordered region.

Belongs to the chloroplast sensor kinase protein family. In terms of assembly, self-interacts. Interacts with the plastoquinone analog 2,5-dibromo-3-methyl-5-isopropyl-p-benzoquinone (DBMIB) and with SIGA/SIG1. [3Fe-4S] cluster is required as a cofactor. Post-translationally, autophosphorylated, possibly on tyrosine residues, in photosystem I (PS I) light and in the presence of manganese ions Mn(2+), to a lesser degree, in the presence of calcium ions Ca(2+), but not in the presence of magnesium ions Mg(2+). Dithiothreitol (DTT) stimulates autophosphorylation. Phosphorylated on Ser-188 in vivo after exposure to far-red light (when plastoquinone (PQ) is oxidized). Not phosphorylated under orange light (reduces PQ).

Its subcellular location is the plastid. The protein resides in the chloroplast stroma. The catalysed reaction is L-tyrosyl-[protein] + ATP = O-phospho-L-tyrosyl-[protein] + ADP + H(+). Functionally, sensor kinase that senses the plastoquinone (PQ) redox state involved in stoichiometry adjustment of both photosystems (e.g. long-term adaptation via transcriptional regulation of reaction center genes of photosystems I and II) and state transitions (e.g. short-term adaptation involving reversible post-translational phosphorylation of light-harvesting complex II, LHC II), thus linking photosynthesis with gene expression in chloroplasts. Autophosphorylates, probably on a tyrosine residue. Probably phosphorylates SIGA/SIG1 in response to plastoquinone redox state modification. Reduced PQ suppresses its autophosphorylation activity. Represses expression of a number of chloroplast-encoded genes. The sequence is that of Chloroplast sensor kinase, chloroplastic from Arabidopsis thaliana (Mouse-ear cress).